The sequence spans 206 residues: Holliday junction resolvase RecU (206 aa).

A disordered region spans residues methionine 1 to threonine 34. Polar residues predominate over residues lysine 8–glycine 32. Mg(2+) is bound by residues threonine 86, aspartate 88, glutamate 101, and glutamine 120.

It belongs to the RecU family. In terms of assembly, homodimer. Interacts with RuvB. Mg(2+) serves as cofactor.

It localises to the cytoplasm. It catalyses the reaction Endonucleolytic cleavage at a junction such as a reciprocal single-stranded crossover between two homologous DNA duplexes (Holliday junction).. In terms of biological role, has at least 2 separable functions; Holliday junction resolution with generation of monomeric chromosomes, and negative modulation of RecA activity. Endonuclease that resolves Holliday junction intermediates in genetic recombination. Cleaves mobile four-strand junctions by introducing symmetrical nicks in paired strands. Promotes annealing of linear ssDNA with homologous dsDNA. Required for DNA repair, homologous recombination and chromosome segregation. Partially inhibits the hydrolysis of dATP or rATP by RecA. Holliday junction resolution is stimulated by RuvB. This Bacillus subtilis (strain 168) protein is Holliday junction resolvase RecU (recU).